Reading from the N-terminus, the 176-residue chain is ATP-dependent protease subunit HslV (176 aa).

The active site involves threonine 2. Glycine 157, cysteine 160, and threonine 163 together coordinate Na(+).

Belongs to the peptidase T1B family. HslV subfamily. As to quaternary structure, a double ring-shaped homohexamer of HslV is capped on each side by a ring-shaped HslU homohexamer. The assembly of the HslU/HslV complex is dependent on binding of ATP.

Its subcellular location is the cytoplasm. The enzyme catalyses ATP-dependent cleavage of peptide bonds with broad specificity.. With respect to regulation, allosterically activated by HslU binding. Protease subunit of a proteasome-like degradation complex believed to be a general protein degrading machinery. In Pectobacterium carotovorum subsp. carotovorum (strain PC1), this protein is ATP-dependent protease subunit HslV.